We begin with the raw amino-acid sequence, 538 residues long: Cytochrome P450 52-M1 (538 aa).

A helical transmembrane segment spans residues 18–38 (GLLPLLFVAFLVLHEPIWLLW). Heme is bound at residue C484.

The protein belongs to the cytochrome P450 family. Requires heme as cofactor.

Its subcellular location is the membrane. The enzyme catalyses an omega-methyl-long-chain fatty acid + reduced [NADPH--hemoprotein reductase] + O2 = an omega-hydroxy-long-chain fatty acid + oxidized [NADPH--hemoprotein reductase] + H2O + H(+). The catalysed reaction is an (omega-1)-ethyl fatty acid + reduced [NADPH--hemoprotein reductase] + O2 = an (omega-1)-hydroxy-long-chain fatty acid + oxidized [NADPH--hemoprotein reductase] + H2O + H(+). It catalyses the reaction (9Z)-octadecenoate + reduced [NADPH--hemoprotein reductase] + O2 = 18-hydroxy-(9Z)-octadecenoate + oxidized [NADPH--hemoprotein reductase] + H2O + H(+). It carries out the reaction (9Z)-octadecenoate + reduced [NADPH--hemoprotein reductase] + O2 = 17-hydroxy-(9Z)-octadecenoate + oxidized [NADPH--hemoprotein reductase] + H2O + H(+). The enzyme catalyses (9Z,12Z)-octadecadienoate + reduced [NADPH--hemoprotein reductase] + O2 = 18-hydroxy-(9Z,12Z)-octadecadienoate + oxidized [NADPH--hemoprotein reductase] + H2O + H(+). The catalysed reaction is (9Z,12Z)-octadecadienoate + reduced [NADPH--hemoprotein reductase] + O2 = 17-hydroxy-(9Z,12Z)-octadecadienoate + oxidized [NADPH--hemoprotein reductase] + H2O + H(+). It catalyses the reaction hexadecanoate + reduced [NADPH--hemoprotein reductase] + O2 = 16-hydroxyhexadecanoate + oxidized [NADPH--hemoprotein reductase] + H2O + H(+). It carries out the reaction (9Z)-hexadecenoate + reduced [NADPH--hemoprotein reductase] + O2 = (9Z)-16-hydroxyhexadec-9-enoate + oxidized [NADPH--hemoprotein reductase] + H2O + H(+). The enzyme catalyses octadecanoate + reduced [NADPH--hemoprotein reductase] + O2 = 18-hydroxyoctadecanoate + oxidized [NADPH--hemoprotein reductase] + H2O + H(+). Functionally, catalyzes the first step of sophorolipid biosynthesis. Catalyzes the terminal (at the omega-position) or subterminal (at the omega(-1)-position) hydroxylation of a fatty acid. This converts the fatty acid to a substrate for the subsequent glycosyltransferase reactions. Oleic acid is the preferred substrate, but it acts on various other C-16, C-18 and C-20 saturated and unsaturated fatty acids, namely palmitic, palmitoleic, stearic, linoleic, cis-9,10-epoxystearic, trans-9,10-epoxystearic and arachidonic acid. In Starmerella bombicola (Yeast), this protein is Cytochrome P450 52-M1.